A 251-amino-acid polypeptide reads, in one-letter code: Phosphate import ATP-binding protein PstB 2 (251 aa).

The 242-residue stretch at 5–246 (LTTENLSLFY…PVKQETNDYI (242 aa)) folds into the ABC transporter domain. 37-44 (GPSGCGKS) contacts ATP.

The protein belongs to the ABC transporter superfamily. Phosphate importer (TC 3.A.1.7) family. As to quaternary structure, the complex is composed of two ATP-binding proteins (PstB), two transmembrane proteins (PstC and PstA) and a solute-binding protein (PstS).

It is found in the cell membrane. The enzyme catalyses phosphate(out) + ATP + H2O = ADP + 2 phosphate(in) + H(+). Its function is as follows. Part of the ABC transporter complex PstSACB involved in phosphate import. Responsible for energy coupling to the transport system. The protein is Phosphate import ATP-binding protein PstB 2 of Lactiplantibacillus plantarum (strain ATCC BAA-793 / NCIMB 8826 / WCFS1) (Lactobacillus plantarum).